The chain runs to 657 residues: Macrolide export ATP-binding/permease protein MacB (657 aa).

Residues 5–242 form the ABC transporter domain; the sequence is LELLDVHRTY…RAVTGESAFD (238 aa). 41–48 is an ATP binding site; sequence GASGSGKS. The next 4 helical transmembrane spans lie at 276–296, 538–558, 596–616, and 620–640; these read FLSV…MALG, IAAI…LVSV, IGVF…GWAV, and LLSV…FGLW.

The protein belongs to the ABC transporter superfamily. Macrolide exporter (TC 3.A.1.122) family. As to quaternary structure, homodimer.

It localises to the cell inner membrane. Its function is as follows. Non-canonical ABC transporter that contains transmembrane domains (TMD), which form a pore in the inner membrane, and an ATP-binding domain (NBD), which is responsible for energy generation. Confers resistance against macrolides. The sequence is that of Macrolide export ATP-binding/permease protein MacB from Chlorobium phaeobacteroides (strain DSM 266 / SMG 266 / 2430).